The chain runs to 264 residues: ATP synthase subunit a (264 aa).

A run of 6 helical transmembrane segments spans residues 29–49 (TWHI…LWIF), 87–107 (NALI…MNFM), 134–154 (DVNI…YYSI), 177–197 (IPVN…SLAL), 208–228 (LIFI…SLGV), and 235–255 (LIFH…LTIV).

The protein belongs to the ATPase A chain family. In terms of assembly, F-type ATPases have 2 components, CF(1) - the catalytic core - and CF(0) - the membrane proton channel. CF(1) has five subunits: alpha(3), beta(3), gamma(1), delta(1), epsilon(1). CF(0) has three main subunits: a(1), b(2) and c(9-12). The alpha and beta chains form an alternating ring which encloses part of the gamma chain. CF(1) is attached to CF(0) by a central stalk formed by the gamma and epsilon chains, while a peripheral stalk is formed by the delta and b chains.

Its subcellular location is the cell inner membrane. Key component of the proton channel; it plays a direct role in the translocation of protons across the membrane. This is ATP synthase subunit a from Shewanella sp. (strain ANA-3).